Consider the following 202-residue polypeptide: Thymidylate kinase (202 aa).

7–14 (GTEGVGKT) provides a ligand contact to ATP.

Belongs to the thymidylate kinase family.

The enzyme catalyses dTMP + ATP = dTDP + ADP. Its function is as follows. Phosphorylation of dTMP to form dTDP in both de novo and salvage pathways of dTTP synthesis. This is Thymidylate kinase from Acinetobacter baylyi (strain ATCC 33305 / BD413 / ADP1).